Here is a 98-residue protein sequence, read N- to C-terminus: Protein translation factor SUI1 homolog (98 aa).

It belongs to the SUI1 family.

This chain is Protein translation factor SUI1 homolog, found in Thermococcus gammatolerans (strain DSM 15229 / JCM 11827 / EJ3).